Here is a 534-residue protein sequence, read N- to C-terminus: Bifunctional purine biosynthesis protein PurH (534 aa).

An MGS-like domain is found at 1 to 148 (MNTVRPIRRA…KNHQDVTIVV (148 aa)).

It belongs to the PurH family.

It catalyses the reaction (6R)-10-formyltetrahydrofolate + 5-amino-1-(5-phospho-beta-D-ribosyl)imidazole-4-carboxamide = 5-formamido-1-(5-phospho-D-ribosyl)imidazole-4-carboxamide + (6S)-5,6,7,8-tetrahydrofolate. It carries out the reaction IMP + H2O = 5-formamido-1-(5-phospho-D-ribosyl)imidazole-4-carboxamide. The protein operates within purine metabolism; IMP biosynthesis via de novo pathway; 5-formamido-1-(5-phospho-D-ribosyl)imidazole-4-carboxamide from 5-amino-1-(5-phospho-D-ribosyl)imidazole-4-carboxamide (10-formyl THF route): step 1/1. It participates in purine metabolism; IMP biosynthesis via de novo pathway; IMP from 5-formamido-1-(5-phospho-D-ribosyl)imidazole-4-carboxamide: step 1/1. The sequence is that of Bifunctional purine biosynthesis protein PurH from Shewanella denitrificans (strain OS217 / ATCC BAA-1090 / DSM 15013).